Here is a 239-residue protein sequence, read N- to C-terminus: Purine nucleoside phosphorylase DeoD-type (239 aa).

Position 5 (H5) interacts with a purine D-ribonucleoside. Phosphate is bound by residues G21 and R25. An N6-acetyllysine modification is found at K27. Phosphate contacts are provided by residues R44 and 88-91 (RVGS). Residues 180-182 (EME) and 204-205 (SD) contribute to the a purine D-ribonucleoside site. The active-site Proton donor is the D205.

The protein belongs to the PNP/UDP phosphorylase family. In terms of assembly, homohexamer; trimer of homodimers.

It carries out the reaction a purine D-ribonucleoside + phosphate = a purine nucleobase + alpha-D-ribose 1-phosphate. The enzyme catalyses a purine 2'-deoxy-D-ribonucleoside + phosphate = a purine nucleobase + 2-deoxy-alpha-D-ribose 1-phosphate. Catalyzes the reversible phosphorolytic breakdown of the N-glycosidic bond in the beta-(deoxy)ribonucleoside molecules, with the formation of the corresponding free purine bases and pentose-1-phosphate. The chain is Purine nucleoside phosphorylase DeoD-type from Shigella dysenteriae serotype 1 (strain Sd197).